The chain runs to 61 residues: Photosystem II reaction center X protein (61 aa).

A helical membrane pass occupies residues 26 to 46 (IGSFIAAALLIVIPATAFLIF).

The protein belongs to the PsbX family. Type 2 subfamily. PSII consists of a core antenna complex that captures photons, and an electron transfer chain that converts photonic excitation into a charge separation. PSII forms dimeric complexes.

It localises to the cellular thylakoid membrane. In terms of biological role, involved in the binding and/or turnover of quinones at the Q(B) site of Photosystem II. In Prochlorococcus marinus (strain MIT 9312), this protein is Photosystem II reaction center X protein.